A 203-amino-acid chain; its full sequence is MKGKFISFEGIDGCGKTTQIKFLEEYLLKQGYNILVLREPGGTKVGEKVRDILLDKNNFISPVTEMLLYASSRAQLVEEKILPAIEEGKIVLLDRFVDSSYVYQGYARGLGIEKVKVVNEIATMGILPDVTIYIDITPEEAMKRRGKREADRLERESWDFHKKVREGYIKLVKEFPKRFVFIDGMQELMKVHKDIIDVVKKYL.

10 to 17 (GIDGCGKT) is a binding site for ATP.

The protein belongs to the thymidylate kinase family.

The enzyme catalyses dTMP + ATP = dTDP + ADP. Phosphorylation of dTMP to form dTDP in both de novo and salvage pathways of dTTP synthesis. This chain is Thymidylate kinase, found in Thermoanaerobacter pseudethanolicus (strain ATCC 33223 / 39E) (Clostridium thermohydrosulfuricum).